Here is a 210-residue protein sequence, read N- to C-terminus: Endo-1,4-beta-xylanase A (210 aa).

An N-terminal signal peptide occupies residues 1 to 19 (MKLKKKMLTLLLTASMSFG). The region spanning 20-210 (LFGATSSAAT…SSGRSNVTVW (191 aa)) is the GH11 domain. E104 functions as the Nucleophile in the catalytic mechanism. E197 acts as the Proton donor in catalysis.

It belongs to the glycosyl hydrolase 11 (cellulase G) family.

It catalyses the reaction Endohydrolysis of (1-&gt;4)-beta-D-xylosidic linkages in xylans.. The protein operates within glycan degradation; xylan degradation. The protein is Endo-1,4-beta-xylanase A (xynA) of Geobacillus stearothermophilus (Bacillus stearothermophilus).